The chain runs to 242 residues: ATP-dependent dethiobiotin synthetase BioD (242 aa).

Glu12–Val17 is a binding site for ATP. Thr16 lines the Mg(2+) pocket. Residue Lys37 is part of the active site. Residue Ser41 coordinates substrate. Residues Asp51 and Glu112 to Gly115 each bind ATP. Residues Asp51 and Glu112 each coordinate Mg(2+).

It belongs to the dethiobiotin synthetase family. As to quaternary structure, homodimer. Mg(2+) is required as a cofactor.

It localises to the cytoplasm. The catalysed reaction is (7R,8S)-7,8-diammoniononanoate + CO2 + ATP = (4R,5S)-dethiobiotin + ADP + phosphate + 3 H(+). Its pathway is cofactor biosynthesis; biotin biosynthesis; biotin from 7,8-diaminononanoate: step 1/2. Functionally, catalyzes a mechanistically unusual reaction, the ATP-dependent insertion of CO2 between the N7 and N8 nitrogen atoms of 7,8-diaminopelargonic acid (DAPA, also called 7,8-diammoniononanoate) to form a ureido ring. The sequence is that of ATP-dependent dethiobiotin synthetase BioD from Bacillus thuringiensis subsp. konkukian (strain 97-27).